Here is a 1335-residue protein sequence, read N- to C-terminus: Protein SPATA31F1 (1335 aa).

A helical membrane pass occupies residues L8–I28. Disordered stretches follow at residues A403–D424, L480–S502, V972–M1002, P1019–S1141, and E1248–T1335. Over residues S414–D424 the composition is skewed to polar residues. Over residues V972–G1000 the composition is skewed to polar residues. 3 stretches are compositionally biased toward basic and acidic residues: residues N1047–D1064, S1071–R1083, and P1129–Q1139.

The protein belongs to the SPATA31 family.

It localises to the membrane. The sequence is that of Protein SPATA31F1 from Homo sapiens (Human).